The primary structure comprises 180 residues: Non-specific lipid transfer protein GPI-anchored 3 (180 aa).

Positions 1–22 are cleaved as a signal peptide; that stretch reads MEAVRFAVAVVLVFCYVTSSNA. Disulfide bonds link Cys-41-Cys-78, Cys-48-Cys-62, Cys-63-Cys-104, and Cys-76-Cys-113. Residues Asn-91 and Asn-120 are each glycosylated (N-linked (GlcNAc...) asparagine). 2 stretches are compositionally biased toward low complexity: residues 116–125 and 133–156; these read SAGTNSSSTP and PASSTSTGTGSGSTGNAAPSTAKP. The segment at 116 to 156 is disordered; sequence SAGTNSSSTPPATPKTPPASSTSTGTGSGSTGNAAPSTAKP. Ser-158 carries the GPI-anchor amidated serine lipid modification. Positions 159-180 are cleaved as a propeptide — removed in mature form; sequence SAPAINFGGLSFASAVVATLFF.

This sequence belongs to the plant LTP family. In terms of tissue distribution, restricted to stamen, pollen and sporophytic tissues. Also detected, at low levels, in stems and leaves.

The protein resides in the cell membrane. In terms of biological role, lipid transfer protein involved in seed and ovule maturation and development, probably by regulating the fatty acids homeostasis during suberin and sporopollenin biosynthesis or deposition. The chain is Non-specific lipid transfer protein GPI-anchored 3 from Arabidopsis thaliana (Mouse-ear cress).